The chain runs to 329 residues: Delta-aminolevulinic acid dehydratase (329 aa).

Lys202 (schiff-base intermediate with substrate) is an active-site residue. Residues Arg212 and Arg223 each contribute to the 5-aminolevulinate site. Mg(2+) is bound at residue Glu239. Catalysis depends on Lys254, which acts as the Schiff-base intermediate with substrate. 2 residues coordinate 5-aminolevulinate: Ser280 and Tyr319.

Belongs to the ALAD family. In terms of assembly, homooctamer.

The enzyme catalyses 2 5-aminolevulinate = porphobilinogen + 2 H2O + H(+). It functions in the pathway porphyrin-containing compound metabolism; protoporphyrin-IX biosynthesis; coproporphyrinogen-III from 5-aminolevulinate: step 1/4. In terms of biological role, catalyzes an early step in the biosynthesis of tetrapyrroles. Binds two molecules of 5-aminolevulinate per subunit, each at a distinct site, and catalyzes their condensation to form porphobilinogen. This chain is Delta-aminolevulinic acid dehydratase (hemB), found in Mycobacterium leprae (strain TN).